We begin with the raw amino-acid sequence, 31 residues long: U2-theraphotoxin-Hhn1a (31 aa).

Cystine bridges form between cysteine 2-cysteine 14, cysteine 7-cysteine 19, and cysteine 13-cysteine 26.

In terms of tissue distribution, expressed by the venom gland.

Its subcellular location is the secreted. Its function is as follows. Agglutinates erythrocytes. This is U2-theraphotoxin-Hhn1a from Cyriopagopus hainanus (Chinese bird spider).